The following is a 189-amino-acid chain: Thymidylate kinase (189 aa).

Residue 7 to 14 (GIDTAGKS) coordinates ATP.

The protein belongs to the thymidylate kinase family.

It carries out the reaction dTMP + ATP = dTDP + ADP. Its function is as follows. Phosphorylation of dTMP to form dTDP in both de novo and salvage pathways of dTTP synthesis. This chain is Thymidylate kinase, found in Aliarcobacter butzleri (strain RM4018) (Arcobacter butzleri).